We begin with the raw amino-acid sequence, 207 residues long: Dephospho-CoA kinase (207 aa).

Residues 4–204 enclose the DPCK domain; sequence VVGLTGGIGS…HLYLQFAEIF (201 aa). Residue 12–17 coordinates ATP; it reads GSGKST.

It belongs to the CoaE family.

The protein localises to the cytoplasm. The catalysed reaction is 3'-dephospho-CoA + ATP = ADP + CoA + H(+). Its pathway is cofactor biosynthesis; coenzyme A biosynthesis; CoA from (R)-pantothenate: step 5/5. Its function is as follows. Catalyzes the phosphorylation of the 3'-hydroxyl group of dephosphocoenzyme A to form coenzyme A. In Aggregatibacter actinomycetemcomitans (Actinobacillus actinomycetemcomitans), this protein is Dephospho-CoA kinase.